We begin with the raw amino-acid sequence, 366 residues long: MNKVILYCRPGFEKECAAEITDKAGRRDIYGFVRVKDNSGYVIFECYQHEDADRLVRELPFRDLIFARQMMVCGELLRDLPPEDRITPIVGMLTGVVERAGELRVEVPDTNECKELMKFCRKFTVPLRTALRNDKILQAQEKPNRPVVHVLFIAPGCCYVGYSYSNNHSPFYMGIPRLKFPSDAPSRSTLKLEEAFHVFIPADEWDERLGSGMYAVDLGACPGGWTYQLVKRSMMVHAVDNGMMAQSLMDTGQVIHHQADGFRFEPPRNNIYWLVCDMVEKPAKVTSRMADWLVNGWCREAIFNLKLPMKKRYEEVALNLEKLTQRLQEGGINAEIHAKQLYHDREEVTVHVRRIWSAIPGRRDER.

S-adenosyl-L-methionine contacts are provided by residues S188, 221-224 (CPGG), D240, D260, and D277. The Proton acceptor role is filled by K306.

Belongs to the class I-like SAM-binding methyltransferase superfamily. RNA methyltransferase RlmE family. RlmM subfamily. As to quaternary structure, monomer.

It is found in the cytoplasm. It carries out the reaction cytidine(2498) in 23S rRNA + S-adenosyl-L-methionine = 2'-O-methylcytidine(2498) in 23S rRNA + S-adenosyl-L-homocysteine + H(+). Functionally, catalyzes the 2'-O-methylation at nucleotide C2498 in 23S rRNA. The polypeptide is Ribosomal RNA large subunit methyltransferase M (Musicola paradisiaca (strain Ech703) (Dickeya paradisiaca)).